The chain runs to 602 residues: GTP-binding protein 2 (602 aa).

Residues G18 to E64 are disordered. The segment covering G29 to P39 has biased composition (gly residues). Over residues K40–G50 the composition is skewed to basic residues. Positions F170–S398 constitute a tr-type G domain. GTP-binding positions include G179–S186, D260–H264, and S316–D319.

It belongs to the TRAFAC class translation factor GTPase superfamily. Classic translation factor GTPase family. GTPBP1 subfamily. As to expression, predominantly expressed in thymus, spleen, and testis. Expressed at lower levels in brain, heart, lung, kidney, and skeletal muscle. In testis, specifically expressed in spermatocytes and round spermatids.

The chain is GTP-binding protein 2 from Mus musculus (Mouse).